The sequence spans 125 residues: Large ribosomal subunit protein bL12 (125 aa).

Belongs to the bacterial ribosomal protein bL12 family. Homodimer. Part of the ribosomal stalk of the 50S ribosomal subunit. Forms a multimeric L10(L12)X complex, where L10 forms an elongated spine to which 2 to 4 L12 dimers bind in a sequential fashion. Binds GTP-bound translation factors.

Functionally, forms part of the ribosomal stalk which helps the ribosome interact with GTP-bound translation factors. Is thus essential for accurate translation. This is Large ribosomal subunit protein bL12 from Gluconobacter oxydans (strain 621H) (Gluconobacter suboxydans).